Consider the following 666-residue polypeptide: ATP-dependent RNA helicase DDX51 (666 aa).

The residue at position 2 (alanine 2) is an N-acetylalanine. The segment at tyrosine 9–glutamate 152 is disordered. A compositionally biased stretch (low complexity) spans proline 10–histidine 28. Over residues alanine 33–glutamine 48 the composition is skewed to basic and acidic residues. The span at arginine 49 to alanine 58 shows a compositional bias: low complexity. A compositionally biased stretch (basic residues) spans arginine 65 to arginine 75. Residues serine 83 and serine 103 each carry the phosphoserine modification. Acidic residues predominate over residues glutamate 97–proline 108. Positions tyrosine 221–isoleucine 229 match the Q motif motif. A Helicase ATP-binding domain is found at glycine 243 to phenylalanine 452. Residue alanine 256–threonine 263 coordinates ATP. Positions aspartate 371–aspartate 374 match the DEAD box motif. One can recognise a Helicase C-terminal domain in the interval valine 494 to glutamine 640.

The protein belongs to the DEAD box helicase family. DDX51/DBP6 subfamily.

The protein localises to the nucleus. It localises to the nucleolus. The enzyme catalyses ATP + H2O = ADP + phosphate + H(+). ATP-binding RNA helicase involved in the biogenesis of 60S ribosomal subunits. The chain is ATP-dependent RNA helicase DDX51 (DDX51) from Homo sapiens (Human).